Consider the following 102-residue polypeptide: MPRPKIARQICGRPANSCFKPNGRPMHQLEQVALAADEFEALRLVDLEGMQQQEAAVVMGVSRQTLANILKKARYKVVDCLSQGKALMMQASDPDTSGDIPL.

This sequence belongs to the UPF0251 family.

The chain is UPF0251 protein ASA_1331 from Aeromonas salmonicida (strain A449).